The primary structure comprises 161 residues: MNARRKKRLALATALIGGVAAIASLLLYALNSNLNLFYTPTEIVQGKKDTGVKPEVGQRIRVGGMVTVGSMVRDPNSLHVEFAVHDAAGGEVIVTYDDLLPDLFREGQGIVAQGVLIEGGKLEATEVLAKHDENYMPPEVAEAMGQSHEKLDYNAEQKSGY.

Topologically, residues 1–8 (MNARRKKR) are cytoplasmic. The chain crosses the membrane as a helical; Signal-anchor for type II membrane protein span at residues 9–29 (LALATALIGGVAAIASLLLYA). Residues 30 to 161 (LNSNLNLFYT…DYNAEQKSGY (132 aa)) are Periplasmic-facing. Positions 131 and 135 each coordinate heme.

This sequence belongs to the CcmE/CycJ family.

It localises to the cell inner membrane. Heme chaperone required for the biogenesis of c-type cytochromes. Transiently binds heme delivered by CcmC and transfers the heme to apo-cytochromes in a process facilitated by CcmF and CcmH. This chain is Cytochrome c-type biogenesis protein CcmE, found in Shewanella woodyi (strain ATCC 51908 / MS32).